The chain runs to 423 residues: Protein CLP1 homolog (423 aa).

Residues Glu16, Lys57, and 119-124 (DVGKST) each bind ATP.

It belongs to the Clp1 family. Clp1 subfamily.

It localises to the nucleus. Required for endonucleolytic cleavage during polyadenylation-dependent pre-mRNA 3'-end formation. The polypeptide is Protein CLP1 homolog (cbc) (Drosophila simulans (Fruit fly)).